We begin with the raw amino-acid sequence, 202 residues long: Dephospho-CoA kinase (202 aa).

The DPCK domain occupies Lys6 to Leu202. Ser14–Glu19 is an ATP binding site.

This sequence belongs to the CoaE family.

Its subcellular location is the cytoplasm. It carries out the reaction 3'-dephospho-CoA + ATP = ADP + CoA + H(+). It functions in the pathway cofactor biosynthesis; coenzyme A biosynthesis; CoA from (R)-pantothenate: step 5/5. Catalyzes the phosphorylation of the 3'-hydroxyl group of dephosphocoenzyme A to form coenzyme A. The chain is Dephospho-CoA kinase from Chlamydia felis (strain Fe/C-56) (Chlamydophila felis).